The chain runs to 527 residues: Bifunctional purine biosynthesis protein PurH (527 aa).

The region spanning 8–156 (AGAKRPIRRA…KNHPSVAVVV (149 aa)) is the MGS-like domain.

The protein belongs to the PurH family.

It carries out the reaction (6R)-10-formyltetrahydrofolate + 5-amino-1-(5-phospho-beta-D-ribosyl)imidazole-4-carboxamide = 5-formamido-1-(5-phospho-D-ribosyl)imidazole-4-carboxamide + (6S)-5,6,7,8-tetrahydrofolate. It catalyses the reaction IMP + H2O = 5-formamido-1-(5-phospho-D-ribosyl)imidazole-4-carboxamide. It functions in the pathway purine metabolism; IMP biosynthesis via de novo pathway; 5-formamido-1-(5-phospho-D-ribosyl)imidazole-4-carboxamide from 5-amino-1-(5-phospho-D-ribosyl)imidazole-4-carboxamide (10-formyl THF route): step 1/1. The protein operates within purine metabolism; IMP biosynthesis via de novo pathway; IMP from 5-formamido-1-(5-phospho-D-ribosyl)imidazole-4-carboxamide: step 1/1. The protein is Bifunctional purine biosynthesis protein PurH of Mycobacterium sp. (strain KMS).